The sequence spans 125 residues: Putative superoxide reductase (125 aa).

6 residues coordinate Fe cation: E12, H14, H40, H46, C110, and H113.

This sequence belongs to the desulfoferrodoxin family. Requires Fe cation as cofactor.

It catalyses the reaction reduced [rubredoxin] + superoxide + 2 H(+) = oxidized [rubredoxin] + H2O2. Uses electrons from reduced NADP, by way of rubredoxin and an oxidoreductase, to catalyze the reduction of superoxide to hydrogen peroxide. This chain is Putative superoxide reductase, found in Archaeoglobus fulgidus (strain ATCC 49558 / DSM 4304 / JCM 9628 / NBRC 100126 / VC-16).